The sequence spans 1195 residues: DNA-directed RNA polymerase subunit Rpo2 (1195 aa).

The span at 894 to 909 (LEEGEERLGPQRRRES) shows a compositional bias: basic and acidic residues. The segment at 894–914 (LEEGEERLGPQRRRESSVTMR) is disordered. Zn(2+) is bound by residues C1135, C1140, C1155, and C1158.

This sequence belongs to the RNA polymerase beta chain family. As to quaternary structure, part of the RNA polymerase complex. Requires Zn(2+) as cofactor.

The protein resides in the cytoplasm. The catalysed reaction is RNA(n) + a ribonucleoside 5'-triphosphate = RNA(n+1) + diphosphate. In terms of biological role, DNA-dependent RNA polymerase (RNAP) catalyzes the transcription of DNA into RNA using the four ribonucleoside triphosphates as substrates. This subunit is involved in DNA promoter recognition. The chain is DNA-directed RNA polymerase subunit Rpo2 from Thermoplasma acidophilum (strain ATCC 25905 / DSM 1728 / JCM 9062 / NBRC 15155 / AMRC-C165).